The chain runs to 464 residues: GDNF family receptor alpha-2 (464 aa).

The signal sequence occupies residues 1–21; the sequence is MILANAFCLFFFLDETLRSLA. Cystine bridges form between Cys40–Cys93, Cys47–Cys53, Cys63–Cys78, Cys95–Cys105, Cys161–Cys222, Cys168–Cys174, Cys185–Cys200, Cys195–Cys241, Cys224–Cys229, Cys251–Cys323, Cys258–Cys264, Cys275–Cys293, Cys285–Cys347, and Cys325–Cys335. N-linked (GlcNAc...) asparagine glycosylation occurs at Asn52. An N-linked (GlcNAc...) asparagine glycan is attached at Asn357. Residues 363–392 form a disordered region; the sequence is MSPKGPTFSATQAPRVEKTPSLPDDLSDST. Low complexity predominate over residues 381 to 392; that stretch reads TPSLPDDLSDST. Asn413 is a glycosylation site (N-linked (GlcNAc...) asparagine). Residue Ser443 is the site of GPI-anchor amidated serine attachment. Positions 444–464 are cleaved as a propeptide — removed in mature form; it reads CRARLSTALTALPLLMVTLAQ.

The protein belongs to the GDNFR family. Interacts with NRTN ligand and RET: forms a 2:2:2 ternary complex composed of NRTN ligand, GFRA2 and RET receptor. Also forms a 4:4:4 tetrameric complex composed of 4 copies of NRTN ligand, GFRA2 and RET receptor, which prevents endocytosis of RET. Interacts with SORL1. Neurons of the superior cervical and dorsal root ganglia, and adult brain and testis. Low level in the substantia nigra, spleen and adrenal gland. Isoform 1, isoform 2 and isoform 3 are all expressed in brain, liver, ileum, spleen, heart and kidney. In brain, isoform 1 is most abundant, isoform 2 slightly less and isoform 3 is lowest. No significant levels of isoform 1, isoform 2 or isoform 3 expression in testis.

The protein localises to the cell membrane. In terms of biological role, receptor for neurturin (NRTN), a growth factor that supports the survival of sympathetic neurons. NRTN-binding leads to autophosphorylation and activation of the RET receptor. Also able to mediate GDNF signaling through the RET tyrosine kinase receptor. Functionally, participates in NRTN-induced 'Ser-727' phosphorylation of STAT3. This chain is GDNF family receptor alpha-2, found in Mus musculus (Mouse).